The sequence spans 696 residues: Translation initiation factor IF-2 (696 aa).

Residues 187-361 enclose the tr-type G domain; it reads ERPPVVTVMG…EMQEIKGIPD (175 aa). The segment at 196–203 is G1; it reads GHVDHGKT. A GTP-binding site is contributed by 196-203; it reads GHVDHGKT. The segment at 221–225 is G2; sequence GITQS. The interval 242–245 is G3; the sequence is DTPG. GTP-binding positions include 242–246 and 296–299; these read DTPGH and NKID. The interval 296–299 is G4; it reads NKID. Residues 333-335 are G5; that stretch reads SAK.

The protein belongs to the TRAFAC class translation factor GTPase superfamily. Classic translation factor GTPase family. IF-2 subfamily.

It localises to the cytoplasm. Functionally, one of the essential components for the initiation of protein synthesis. Protects formylmethionyl-tRNA from spontaneous hydrolysis and promotes its binding to the 30S ribosomal subunits. Also involved in the hydrolysis of GTP during the formation of the 70S ribosomal complex. This Thermosipho africanus (strain TCF52B) protein is Translation initiation factor IF-2.